The chain runs to 312 residues: Aspartate carbamoyltransferase catalytic subunit (312 aa).

Residues R55 and T56 each coordinate carbamoyl phosphate. An L-aspartate-binding site is contributed by K83. Positions 105, 133, and 136 each coordinate carbamoyl phosphate. R166 and R220 together coordinate L-aspartate. 2 residues coordinate carbamoyl phosphate: G261 and P262.

The protein belongs to the aspartate/ornithine carbamoyltransferase superfamily. ATCase family. In terms of assembly, heterododecamer (2C3:3R2) of six catalytic PyrB chains organized as two trimers (C3), and six regulatory PyrI chains organized as three dimers (R2).

It carries out the reaction carbamoyl phosphate + L-aspartate = N-carbamoyl-L-aspartate + phosphate + H(+). It participates in pyrimidine metabolism; UMP biosynthesis via de novo pathway; (S)-dihydroorotate from bicarbonate: step 2/3. Its function is as follows. Catalyzes the condensation of carbamoyl phosphate and aspartate to form carbamoyl aspartate and inorganic phosphate, the committed step in the de novo pyrimidine nucleotide biosynthesis pathway. The sequence is that of Aspartate carbamoyltransferase catalytic subunit from Prosthecochloris aestuarii (strain DSM 271 / SK 413).